Reading from the N-terminus, the 372-residue chain is Aminomethyltransferase (372 aa).

The protein belongs to the GcvT family. In terms of assembly, the glycine cleavage system is composed of four proteins: P, T, L and H.

The enzyme catalyses N(6)-[(R)-S(8)-aminomethyldihydrolipoyl]-L-lysyl-[protein] + (6S)-5,6,7,8-tetrahydrofolate = N(6)-[(R)-dihydrolipoyl]-L-lysyl-[protein] + (6R)-5,10-methylene-5,6,7,8-tetrahydrofolate + NH4(+). Its function is as follows. The glycine cleavage system catalyzes the degradation of glycine. This Burkholderia mallei (strain NCTC 10247) protein is Aminomethyltransferase.